Consider the following 768-residue polypeptide: Polyadenylate-binding protein, cytoplasmic and nuclear (768 aa).

A compositionally biased stretch (polar residues) spans 1–11 (MSAETATNPPV). The interval 1 to 52 (MSAETATNPPVDTTPGAAPESATNGSNANVAADTTAGEASQTTSSTTPTAQP) is disordered. Residues 39-52 (ASQTTSSTTPTAQP) show a composition bias toward low complexity. 4 RRM domains span residues 55 to 133 (ASLY…WSQR), 143 to 220 (GNVF…HHIA), 236 to 314 (TNVY…RAQK), and 340 to 470 (VNLY…LAQR). Disordered regions lie at residues 374–428 (DFAP…EKKP), 633–662 (QQGM…NASP), and 739–768 (KNKG…ETKS). Residues 637–646 (GRPGQAGRGQ) are compositionally biased toward gly residues. In terms of domain architecture, PABC spans 662–739 (PNGLTLQVLN…ALTVYDEYVK (78 aa)). The segment covering 753 to 768 (NKSKDASQETAEETKS) has biased composition (basic and acidic residues).

The protein belongs to the polyadenylate-binding protein type-1 family.

The protein localises to the cytoplasm. It localises to the nucleus. In terms of biological role, binds the poly(A) tail of mRNA. Appears to be an important mediator of the multiple roles of the poly(A) tail in mRNA biogenesis, stability and translation. In the nucleus, involved in both mRNA cleavage and polyadenylation. Is also required for efficient mRNA export to the cytoplasm. Acts in concert with a poly(A)-specific nuclease (PAN) to affect poly(A) tail shortening, which may occur concomitantly with either nucleocytoplasmic mRNA transport or translational initiation. In the cytoplasm, stimulates translation initiation and regulates mRNA decay through translation termination-coupled poly(A) shortening, probably mediated by PAN. The chain is Polyadenylate-binding protein, cytoplasmic and nuclear (PAB1) from Coccidioides immitis (strain RS) (Valley fever fungus).